The sequence spans 225 residues: tRNA (guanine-N(1)-)-methyltransferase (225 aa).

S-adenosyl-L-methionine-binding positions include glycine 112 and 132–137 (IGDYVL).

The protein belongs to the RNA methyltransferase TrmD family. As to quaternary structure, homodimer.

The protein resides in the cytoplasm. It carries out the reaction guanosine(37) in tRNA + S-adenosyl-L-methionine = N(1)-methylguanosine(37) in tRNA + S-adenosyl-L-homocysteine + H(+). In terms of biological role, specifically methylates guanosine-37 in various tRNAs. This chain is tRNA (guanine-N(1)-)-methyltransferase, found in Porphyromonas gingivalis (strain ATCC BAA-308 / W83).